The primary structure comprises 178 residues: Peptide deformylase (178 aa).

Residues Cys-96 and His-138 each contribute to the Fe cation site. The active site involves Glu-139. Fe cation is bound at residue His-142.

This sequence belongs to the polypeptide deformylase family. The cofactor is Fe(2+).

It carries out the reaction N-terminal N-formyl-L-methionyl-[peptide] + H2O = N-terminal L-methionyl-[peptide] + formate. In terms of biological role, removes the formyl group from the N-terminal Met of newly synthesized proteins. Requires at least a dipeptide for an efficient rate of reaction. N-terminal L-methionine is a prerequisite for activity but the enzyme has broad specificity at other positions. The polypeptide is Peptide deformylase (Bartonella tribocorum (strain CIP 105476 / IBS 506)).